The sequence spans 310 residues: Aspartate carbamoyltransferase catalytic subunit (310 aa).

Residues R54 and T55 each coordinate carbamoyl phosphate. K84 is a binding site for L-aspartate. Residues R105, H134, and Q137 each coordinate carbamoyl phosphate. R167 and R229 together coordinate L-aspartate. Carbamoyl phosphate is bound by residues L267 and P268.

The protein belongs to the aspartate/ornithine carbamoyltransferase superfamily. ATCase family. As to quaternary structure, heterododecamer (2C3:3R2) of six catalytic PyrB chains organized as two trimers (C3), and six regulatory PyrI chains organized as three dimers (R2).

The enzyme catalyses carbamoyl phosphate + L-aspartate = N-carbamoyl-L-aspartate + phosphate + H(+). Its pathway is pyrimidine metabolism; UMP biosynthesis via de novo pathway; (S)-dihydroorotate from bicarbonate: step 2/3. In terms of biological role, catalyzes the condensation of carbamoyl phosphate and aspartate to form carbamoyl aspartate and inorganic phosphate, the committed step in the de novo pyrimidine nucleotide biosynthesis pathway. This is Aspartate carbamoyltransferase catalytic subunit from Enterobacter sp. (strain 638).